A 1278-amino-acid chain; its full sequence is Alpha-glucan water dikinase 2 (1278 aa).

The signal sequence occupies residues 1-23 (MATSKSQQFQLIEGMELQITVTG). Residue His-886 is the Tele-phosphohistidine intermediate of the active site.

This sequence belongs to the PEP-utilizing enzyme family. As to quaternary structure, homodimer. It depends on Mg(2+) as a cofactor.

It catalyses the reaction [(1-&gt;4)-alpha-D-glucosyl](n) + n ATP + n H2O = [(1-&gt;4)-6-phospho-alpha-D-glucosyl](n) + n AMP + n phosphate + 2n H(+). In terms of biological role, mediates the incorporation of phosphate into alpha-glucan, mostly at the C-6 position of glucose units. The sequence is that of Alpha-glucan water dikinase 2 (GWD2) from Arabidopsis thaliana (Mouse-ear cress).